A 483-amino-acid chain; its full sequence is Glutamyl-tRNA(Gln) amidotransferase subunit A (483 aa).

Residues Lys-76 and Ser-151 each act as charge relay system in the active site. Ser-175 functions as the Acyl-ester intermediate in the catalytic mechanism.

This sequence belongs to the amidase family. GatA subfamily. In terms of assembly, heterotrimer of A, B and C subunits.

It carries out the reaction L-glutamyl-tRNA(Gln) + L-glutamine + ATP + H2O = L-glutaminyl-tRNA(Gln) + L-glutamate + ADP + phosphate + H(+). Functionally, allows the formation of correctly charged Gln-tRNA(Gln) through the transamidation of misacylated Glu-tRNA(Gln) in organisms which lack glutaminyl-tRNA synthetase. The reaction takes place in the presence of glutamine and ATP through an activated gamma-phospho-Glu-tRNA(Gln). This Pseudomonas entomophila (strain L48) protein is Glutamyl-tRNA(Gln) amidotransferase subunit A.